Reading from the N-terminus, the 546-residue chain is Pectinesterase 1 (546 aa).

The N-terminal stretch at 1-39 (MANPQQPLLIKTHKQNPIISFKILSFVITLFVALFLVAP) is a signal peptide. Positions 40–229 (YQVEIKHSNL…RKLMESSGKD (190 aa)) are excised as a propeptide. The substrate site is built by Thr-308 and Gln-338. Cys-327 and Cys-354 are oxidised to a cystine. The active-site Proton donor is the Asp-361. Asp-382 functions as the Nucleophile in the catalytic mechanism. A disulfide bridge links Cys-395 with Cys-429. Arg-450 and Trp-452 together coordinate substrate.

In the N-terminal section; belongs to the PMEI family. It in the C-terminal section; belongs to the pectinesterase family.

Its subcellular location is the secreted. It is found in the cell wall. It carries out the reaction [(1-&gt;4)-alpha-D-galacturonosyl methyl ester](n) + n H2O = [(1-&gt;4)-alpha-D-galacturonosyl](n) + n methanol + n H(+). It functions in the pathway glycan metabolism; pectin degradation; 2-dehydro-3-deoxy-D-gluconate from pectin: step 1/5. In terms of biological role, pectinesterase may play a role in cell wall metabolism during fruit growth and development prior to ripening and may be required for preparing cell walls for softening by polygalacturonase during fruit ripening. In Solanum lycopersicum (Tomato), this protein is Pectinesterase 1 (PME1.9).